A 329-amino-acid chain; its full sequence is GTPase Obg (329 aa).

One can recognise an Obg domain in the interval 1–159 (MQFIDQARIT…WFLQLELKLL (159 aa)). Residues 160–328 (AEVGIIGLPN…LLAQVWKELG (169 aa)) enclose the OBG-type G domain. ATP-binding positions include 166–173 (GLPNAGKS), 191–195 (FTTLV), 213–216 (DIPG), 280–283 (NKQE), and 309–311 (SAA). Serine 173 and threonine 193 together coordinate Mg(2+).

The protein belongs to the TRAFAC class OBG-HflX-like GTPase superfamily. OBG GTPase family. As to quaternary structure, monomer. Mg(2+) serves as cofactor.

Its subcellular location is the cytoplasm. An essential GTPase which binds GTP, GDP and possibly (p)ppGpp with moderate affinity, with high nucleotide exchange rates and a fairly low GTP hydrolysis rate. Plays a role in control of the cell cycle, stress response, ribosome biogenesis and in those bacteria that undergo differentiation, in morphogenesis control. This chain is GTPase Obg, found in Prochlorococcus marinus (strain MIT 9303).